We begin with the raw amino-acid sequence, 115 residues long: Large ribosomal subunit protein bL19 (115 aa).

This sequence belongs to the bacterial ribosomal protein bL19 family.

This protein is located at the 30S-50S ribosomal subunit interface and may play a role in the structure and function of the aminoacyl-tRNA binding site. This Streptococcus sanguinis (strain SK36) protein is Large ribosomal subunit protein bL19.